Consider the following 394-residue polypeptide: DNA replication and repair protein RecF (394 aa).

30–37 (GSNGQGKT) serves as a coordination point for ATP.

Belongs to the RecF family.

The protein resides in the cytoplasm. In terms of biological role, the RecF protein is involved in DNA metabolism; it is required for DNA replication and normal SOS inducibility. RecF binds preferentially to single-stranded, linear DNA. It also seems to bind ATP. The polypeptide is DNA replication and repair protein RecF (Cutibacterium acnes (strain DSM 16379 / KPA171202) (Propionibacterium acnes)).